We begin with the raw amino-acid sequence, 91 residues long: Elongation factor 1-beta (91 aa).

The protein belongs to the EF-1-beta/EF-1-delta family.

Its function is as follows. Promotes the exchange of GDP for GTP in EF-1-alpha/GDP, thus allowing the regeneration of EF-1-alpha/GTP that could then be used to form the ternary complex EF-1-alpha/GTP/AAtRNA. The protein is Elongation factor 1-beta of Caldivirga maquilingensis (strain ATCC 700844 / DSM 13496 / JCM 10307 / IC-167).